The following is a 309-amino-acid chain: NAD-dependent protein deacylase sirtuin-5A, mitochondrial (309 aa).

The N-terminal 35 residues, 1–35 (MILLTFHTRRLVSHAYCGLKPASQKKSIALEMTRP), are a transit peptide targeting the mitochondrion. Positions 36-306 (SSNLADFREA…PPALARHETE (271 aa)) constitute a Deacetylase sirtuin-type domain. NAD(+) is bound at residue 57-76 (GAGVSAESGVPTFRGAGGYW). Substrate contacts are provided by tyrosine 101 and arginine 104. 139 to 142 (QNID) is a binding site for NAD(+). The active-site Proton acceptor is histidine 157. Residues cysteine 165, cysteine 168, cysteine 206, and cysteine 211 each contribute to the Zn(2+) site. NAD(+) contacts are provided by residues 248–250 (GTS), 274–276 (NME), and cysteine 292.

This sequence belongs to the sirtuin family. Class III subfamily. The cofactor is Zn(2+).

It localises to the mitochondrion. The protein resides in the cytoplasm. It is found in the cytosol. The protein localises to the nucleus. The catalysed reaction is N(6)-malonyl-L-lysyl-[protein] + NAD(+) + H2O = 2''-O-malonyl-ADP-D-ribose + nicotinamide + L-lysyl-[protein]. It carries out the reaction N(6)-succinyl-L-lysyl-[protein] + NAD(+) + H2O = 2''-O-succinyl-ADP-D-ribose + nicotinamide + L-lysyl-[protein]. The enzyme catalyses N(6)-glutaryl-L-lysyl-[protein] + NAD(+) + H2O = 2''-O-glutaryl-ADP-D-ribose + nicotinamide + L-lysyl-[protein]. In terms of biological role, NAD-dependent lysine demalonylase, desuccinylase and deglutarylase that specifically removes malonyl, succinyl and glutaryl groups on target proteins. Has weak NAD-dependent protein deacetylase activity; however this activity may not be physiologically relevant in vivo. This is NAD-dependent protein deacylase sirtuin-5A, mitochondrial (sirt5-a) from Xenopus laevis (African clawed frog).